The primary structure comprises 425 residues: Phosphoribosylamine--glycine ligase (425 aa).

One can recognise an ATP-grasp domain in the interval 107 to 312; sequence KDLCARYNIP…LLVLLNAAVD (206 aa). Position 133-193 (133-193) interacts with ATP; it reads VDQTGAPIVI…EEFMTGEEAS (61 aa). The segment at 214-233 is disordered; that stretch reads RVGDGDVGPNTGGMGAYSPA. Mg(2+)-binding residues include glutamate 282 and asparagine 284.

It belongs to the GARS family. It depends on Mg(2+) as a cofactor. Requires Mn(2+) as cofactor.

It catalyses the reaction 5-phospho-beta-D-ribosylamine + glycine + ATP = N(1)-(5-phospho-beta-D-ribosyl)glycinamide + ADP + phosphate + H(+). It functions in the pathway purine metabolism; IMP biosynthesis via de novo pathway; N(1)-(5-phospho-D-ribosyl)glycinamide from 5-phospho-alpha-D-ribose 1-diphosphate: step 2/2. In Mesorhizobium japonicum (strain LMG 29417 / CECT 9101 / MAFF 303099) (Mesorhizobium loti (strain MAFF 303099)), this protein is Phosphoribosylamine--glycine ligase.